A 425-amino-acid chain; its full sequence is Serine--tRNA ligase (425 aa).

Position 233 to 235 (233 to 235 (TAE)) interacts with L-serine. An ATP-binding site is contributed by 264–266 (RAE). Glu287 contacts L-serine. Position 351–354 (351–354 (EISS)) interacts with ATP. Ser387 lines the L-serine pocket.

Belongs to the class-II aminoacyl-tRNA synthetase family. Type-1 seryl-tRNA synthetase subfamily. As to quaternary structure, homodimer. The tRNA molecule binds across the dimer.

The protein resides in the cytoplasm. The catalysed reaction is tRNA(Ser) + L-serine + ATP = L-seryl-tRNA(Ser) + AMP + diphosphate + H(+). The enzyme catalyses tRNA(Sec) + L-serine + ATP = L-seryl-tRNA(Sec) + AMP + diphosphate + H(+). The protein operates within aminoacyl-tRNA biosynthesis; selenocysteinyl-tRNA(Sec) biosynthesis; L-seryl-tRNA(Sec) from L-serine and tRNA(Sec): step 1/1. In terms of biological role, catalyzes the attachment of serine to tRNA(Ser). Is also able to aminoacylate tRNA(Sec) with serine, to form the misacylated tRNA L-seryl-tRNA(Sec), which will be further converted into selenocysteinyl-tRNA(Sec). The chain is Serine--tRNA ligase from Clostridium perfringens (strain SM101 / Type A).